The chain runs to 327 residues: uncharacterized protein (327 aa).

A helical transmembrane segment spans residues 13–33 (IICIISIIVLLLIIISLYPHK).

The protein localises to the membrane. This is an uncharacterized protein from Caenorhabditis elegans.